The primary structure comprises 225 residues: Rho GDP-dissociation inhibitor 3 (225 aa).

Belongs to the Rho GDI family. As to expression, primarily expressed in pancreas and brain.

It localises to the cytoplasm. Functionally, inhibits GDP/GTP exchange reaction of RhoB. Interacts specifically with the GDP- and GTP-bound forms of post-translationally processed Rhob and Rhog proteins, both of which show a growth-regulated expression in mammalian cells. Stimulates the release of the GDP-bound but not the GTP-bound RhoB protein. Also inhibits the GDP/GTP exchange of RhoB but shows less ability to inhibit the dissociation of prebound GTP. This chain is Rho GDP-dissociation inhibitor 3 (ARHGDIG), found in Homo sapiens (Human).